Here is a 654-residue protein sequence, read N- to C-terminus: Transcription factor E2-alpha (654 aa).

Residues 19–27 carry the 9aaTAD motif; the sequence is LLDFSMMFP. Residues 31 to 103 form a disordered region; that stretch reads TNGKGRPASL…LGPGLGGKSG (73 aa). Over residues 55 to 68 the composition is skewed to low complexity; it reads SSGSWGSGDQSSSS. Residues 69 to 79 show a composition bias toward polar residues; the sequence is FDPSRTFSEGT. Low complexity predominate over residues 84–94; that stretch reads SHSSLSSSTFL. Residues S134 and S139 each carry the phosphoserine modification. 4 disordered regions span residues 135-205, 239-268, 292-329, and 343-385; these read PGPL…SAKT, MLGG…FGGL, SFSS…GSSG, and DHSS…YDGG. Residues 147 to 156 are compositionally biased toward low complexity; it reads SQYYPSYSGS. The short motif at 170-176 is the Nuclear localization signal element; it reads PKKVRKV. Positions 256–268 are enriched in low complexity; that stretch reads VGSSGSSSTFGGL. Residues 343 to 354 are compositionally biased toward low complexity; sequence DHSSNNFSSSPS. Position 355 is a phosphothreonine (T355). S359 bears the Phosphoserine mark. Position 371 is an omega-N-methylarginine (R371). The residue at position 379 (S379) is a Phosphoserine. Positions 389–425 are leucine-zipper; sequence LQSKIEDHLDEAIHVLRSHAVGTAGDMHTLLPGHGAL. The segment at 461–552 is disordered; it reads NHAALPSQPG…KAEREKERRV (92 aa). K498 participates in a covalent cross-link: Glycyl lysine isopeptide (Lys-Gly) (interchain with G-Cter in SUMO2). The span at 512–523 shows a compositional bias: basic and acidic residues; that stretch reads DHSEEEKKELKA. S529 is modified (phosphoserine). At D531 the chain carries Phosphothreonine. The span at 542–552 shows a compositional bias: basic and acidic residues; it reads QKAEREKERRV. The bHLH domain maps to 549 to 602; the sequence is ERRVANNARERLRVRDINEAFKELGRMCQLHLNSEKPQTKLLILHQAVSVILNL. K625 is covalently cross-linked (Glycyl lysine isopeptide (Lys-Gly) (interchain with G-Cter in SUMO2)). Positions 633-654 are disordered; it reads PQMVLSAPHPGLSEAHNPAGHM.

As to quaternary structure, homodimer. Heterodimer; efficient DNA binding requires dimerization with another bHLH protein. Forms a heterodimer with ASH1, TWIST1 and TWIST2. Forms a heterodimer with MYOG; heterodimerization enhances MYOG DNA-binding and transcriptional activities. Forms a heterodimer with NEUROD1; the heterodimer is inhibited in presence of ID2, but not NR0B2, to E-box element. Forms a heterodimer with TCF15; the heterodimer binds E-box element. Forms a heterodimer with ATOH8; repress transcription of TCF3 and TCF3/NEUROG3 dimer-induced transactivation of E box-dependent promoters. Component of a nuclear TAL-1 complex composed at least of CBFA2T3, LDB1, TAL1 and TCF3. Interacts with NEUROD2, PTF1A and TGFB1I1. Interacts with EP300 and UBE2I. Interacts with BHLHA9. Interacts with ASB2; the interaction is mediated by SKP2 and targets TCF3 for Notch-induced proteasomal degradation. In terms of assembly, forms a heterodimer with ATOH7; required for ATOH7 DNA-binding. Interacts with RALGAPA1 and FIGLA. In terms of processing, phosphorylated following NGF stimulation. Post-translationally, undergoes Notch-induced ubiquitination and subsequent proteasomal degradation which is mediated by ASB1 or ASB2, the substrate-recognition components of probable ECS E3 ubiquitin-protein ligase complexes.

It localises to the nucleus. Its function is as follows. Transcriptional regulator involved in the initiation of neuronal differentiation and mesenchymal to epithelial transition. Heterodimers between TCF3 and tissue-specific basic helix-loop-helix (bHLH) proteins play major roles in determining tissue-specific cell fate during embryogenesis, like muscle or early B-cell differentiation. Together with TCF15, required for the mesenchymal to epithelial transition. Dimers bind DNA on E-box motifs: 5'-CANNTG-3'. Binds to the kappa-E2 site in the kappa immunoglobulin gene enhancer. Binds to IEB1 and IEB2, which are short DNA sequences in the insulin gene transcription control region. Facilitates ATOH7 binding to DNA at the consensus sequence 5'-CAGGTG-3', and positively regulates transcriptional activity. This Homo sapiens (Human) protein is Transcription factor E2-alpha (TCF3).